Consider the following 205-residue polypeptide: Cytochrome c biogenesis ATP-binding export protein CcmA (205 aa).

The 203-residue stretch at 2 to 204 (LEVSNLTAIR…SPKLRKIKLG (203 aa)) folds into the ABC transporter domain. 34–41 (GRNGTGKT) serves as a coordination point for ATP.

Belongs to the ABC transporter superfamily. CcmA exporter (TC 3.A.1.107) family. In terms of assembly, the complex is composed of two ATP-binding proteins (CcmA) and two transmembrane proteins (CcmB).

The protein resides in the cell inner membrane. It catalyses the reaction heme b(in) + ATP + H2O = heme b(out) + ADP + phosphate + H(+). Its function is as follows. Part of the ABC transporter complex CcmAB involved in the biogenesis of c-type cytochromes; once thought to export heme, this seems not to be the case, but its exact role is uncertain. Responsible for energy coupling to the transport system. This chain is Cytochrome c biogenesis ATP-binding export protein CcmA, found in Vibrio parahaemolyticus serotype O3:K6 (strain RIMD 2210633).